The sequence spans 614 residues: Jacalin-related lectin 14 (614 aa).

4 Jacalin-type lectin domains span residues 27–169 (VQKM…YFSW), 172–314 (PRKM…YFTT), 317–462 (PTKS…YFSP), and 468–611 (AEKL…HVVP).

This sequence belongs to the jacalin lectin family.

This is Jacalin-related lectin 14 (JAL14) from Arabidopsis thaliana (Mouse-ear cress).